The sequence spans 137 residues: uncharacterized protein (137 aa).

The interval 1-26 (MKDKMWCEDTAQPHRRLPAPPSSSSP) is disordered.

This is an uncharacterized protein from Homo sapiens (Human).